The sequence spans 361 residues: Phospho-N-acetylmuramoyl-pentapeptide-transferase (361 aa).

10 consecutive transmembrane segments (helical) span residues Tyr21–Gly41, Met74–Ala94, Tyr97–Tyr117, Trp132–Gly152, Val168–Gly188, Gly199–Thr219, Leu239–Tyr259, Phe264–Val284, Phe288–Val308, and Val339–Lys359.

Belongs to the glycosyltransferase 4 family. MraY subfamily. It depends on Mg(2+) as a cofactor.

Its subcellular location is the cell inner membrane. It carries out the reaction UDP-N-acetyl-alpha-D-muramoyl-L-alanyl-gamma-D-glutamyl-meso-2,6-diaminopimeloyl-D-alanyl-D-alanine + di-trans,octa-cis-undecaprenyl phosphate = di-trans,octa-cis-undecaprenyl diphospho-N-acetyl-alpha-D-muramoyl-L-alanyl-D-glutamyl-meso-2,6-diaminopimeloyl-D-alanyl-D-alanine + UMP. The protein operates within cell wall biogenesis; peptidoglycan biosynthesis. Functionally, catalyzes the initial step of the lipid cycle reactions in the biosynthesis of the cell wall peptidoglycan: transfers peptidoglycan precursor phospho-MurNAc-pentapeptide from UDP-MurNAc-pentapeptide onto the lipid carrier undecaprenyl phosphate, yielding undecaprenyl-pyrophosphoryl-MurNAc-pentapeptide, known as lipid I. The protein is Phospho-N-acetylmuramoyl-pentapeptide-transferase of Histophilus somni (strain 129Pt) (Haemophilus somnus).